The following is a 258-amino-acid chain: Protein SAWADEE HOMEODOMAIN HOMOLOG 1 (258 aa).

The tract at residues 138–244 (AWYDVSSFLT…LVRYELDNTE (107 aa)) is SAWADEE domain. Zn(2+) is bound by residues C191, H225, C230, and C232.

Associates with the RNA polymerase IV (Pol IV) complex. Interacts with NRPD1, NRPD2, NRPD3, NRPD3B, CLSY1 and CLSY2.

The protein localises to the nucleus. Functionally, involved in RNA-directed DNA methylation (RdDM). Required for the silencing of some endogenous RdDM targets and accumulation of 24-nt siRNAs, but not for the production of Pol V-dependent transcripts. Functions in transcriptional silencing through both DNA methylation-dependent and -independent pathways. Required for both maintenance and de-novo DNA methylation. Plays a role in the recruitment of Pol IV to genomic regions associated with K9 methylated histone H3 that are targets for RdDM. The chain is Protein SAWADEE HOMEODOMAIN HOMOLOG 1 (SHH1) from Arabidopsis thaliana (Mouse-ear cress).